The chain runs to 268 residues: Chymotrypsin-C (268 aa).

The signal sequence occupies residues 1–16 (MLGITVLAAILACASS). The propeptide at 17–29 (CGDPTFPPNLSAR) is activation peptide. 5 cysteine pairs are disulfide-bonded: Cys17-Cys141, Cys59-Cys75, Cys155-Cys222, Cys186-Cys202, and Cys212-Cys243. Residue Asn25 is glycosylated (N-linked (GlcNAc...) asparagine). Residues 30–267 (VVGGEDAVPN…YIDWIKEKIQ (238 aa)) enclose the Peptidase S1 domain. Residue His74 is the Charge relay system of the active site. Residues Asn79 and Asn90 are each glycosylated (N-linked (GlcNAc...) asparagine). Asp121 acts as the Charge relay system in catalysis. The N-linked (GlcNAc...) asparagine glycan is linked to Asn182. Ser216 serves as the catalytic Charge relay system.

Belongs to the peptidase S1 family. Elastase subfamily.

The enzyme catalyses Preferential cleavage: Leu-|-Xaa, Tyr-|-Xaa, Phe-|-Xaa, Met-|-Xaa, Trp-|-Xaa, Gln-|-Xaa, Asn-|-Xaa.. Functionally, regulates activation and degradation of trypsinogens and procarboxypeptidases by targeting specific cleavage sites within their zymogen precursors. Has chymotrypsin-type protease activity and hypocalcemic activity. Cleaves TRY4 and TRY5 and thereby inhibits their autoactivation. This Mus musculus (Mouse) protein is Chymotrypsin-C (Ctrc).